The sequence spans 25 residues: Fructokinase-1 (25 aa).

Belongs to the ROK (NagC/XylR) family. As to quaternary structure, homodimer. Requires Mg(2+) as cofactor.

It carries out the reaction D-fructose + ATP = D-fructose 6-phosphate + ADP + H(+). Inhibition by zinc ions (Potential). Inactivated by EDTA. This is Fructokinase-1 from Lactococcus lactis subsp. lactis (Streptococcus lactis).